Reading from the N-terminus, the 307-residue chain is Aspartate carbamoyltransferase catalytic subunit (307 aa).

Residues arginine 59 and threonine 60 each contribute to the carbamoyl phosphate site. Lysine 87 provides a ligand contact to L-aspartate. Carbamoyl phosphate-binding residues include arginine 109, histidine 139, and glutamine 142. 2 residues coordinate L-aspartate: arginine 172 and arginine 224. Carbamoyl phosphate contacts are provided by alanine 265 and proline 266.

Belongs to the aspartate/ornithine carbamoyltransferase superfamily. ATCase family. In terms of assembly, heterododecamer (2C3:3R2) of six catalytic PyrB chains organized as two trimers (C3), and six regulatory PyrI chains organized as three dimers (R2).

The catalysed reaction is carbamoyl phosphate + L-aspartate = N-carbamoyl-L-aspartate + phosphate + H(+). The protein operates within pyrimidine metabolism; UMP biosynthesis via de novo pathway; (S)-dihydroorotate from bicarbonate: step 2/3. Its function is as follows. Catalyzes the condensation of carbamoyl phosphate and aspartate to form carbamoyl aspartate and inorganic phosphate, the committed step in the de novo pyrimidine nucleotide biosynthesis pathway. The sequence is that of Aspartate carbamoyltransferase catalytic subunit from Streptococcus agalactiae serotype Ia (strain ATCC 27591 / A909 / CDC SS700).